The sequence spans 185 residues: Large ribosomal subunit protein eL19 (185 aa).

Positions 152–185 are disordered; it reads SDKLTSQQEARRAKNTASRAKRNEKAQIVAKVDV.

The protein belongs to the eukaryotic ribosomal protein eL19 family.

The chain is Large ribosomal subunit protein eL19 (RPL19) from Tetrahymena thermophila (strain SB210).